We begin with the raw amino-acid sequence, 156 residues long: Ribosomal RNA large subunit methyltransferase H (156 aa).

S-adenosyl-L-methionine contacts are provided by residues Leu73, Gly104, and 123–128; that span reads LSPLTL.

This sequence belongs to the RNA methyltransferase RlmH family. As to quaternary structure, homodimer.

The protein localises to the cytoplasm. The enzyme catalyses pseudouridine(1915) in 23S rRNA + S-adenosyl-L-methionine = N(3)-methylpseudouridine(1915) in 23S rRNA + S-adenosyl-L-homocysteine + H(+). In terms of biological role, specifically methylates the pseudouridine at position 1915 (m3Psi1915) in 23S rRNA. This is Ribosomal RNA large subunit methyltransferase H from Sodalis glossinidius (strain morsitans).